Here is a 473-residue protein sequence, read N- to C-terminus: N-lysine methyltransferase SETD6 (473 aa).

N6-methylated lysine; by autocatalysis is present on Lys-39. An SET domain is found at 60 to 286; sequence PPAQVAVSRQ…KGHEIFNTYG (227 aa). 73-75 is an S-adenosyl-L-methionine binding site; the sequence is AGY. Substrate is bound at residue Trp-122. Lys-179 bears the N6-methylated lysine; by autocatalysis mark. An S-adenosyl-L-methionine-binding site is contributed by Tyr-223. Positions 224 and 226 each coordinate substrate. An S-adenosyl-L-methionine-binding site is contributed by 251 to 252; that stretch reads NH. Positions 262 and 297 each coordinate substrate. Residue Tyr-297 coordinates S-adenosyl-L-methionine. Lys-372 is modified (N6-methylated lysine; by autocatalysis).

The protein belongs to the class V-like SAM-binding methyltransferase superfamily. Histone-lysine methyltransferase family. SETD6 subfamily. As to quaternary structure, monomer, homodimer and homotrimer; these structures are stabilized in the presence of S-adenosyl-L-methionine (SAM). Automethylated; Lys-39 and Lys-179 serve as the major automethylation sites.

Its subcellular location is the nucleus. It carries out the reaction L-lysyl-[protein] + S-adenosyl-L-methionine = N(6)-methyl-L-lysyl-[protein] + S-adenosyl-L-homocysteine + H(+). The catalysed reaction is L-lysyl(8)-[histone H2AZ] + S-adenosyl-L-methionine = N(6)-methyl-L-lysyl(8)-[histone H2AZ] + S-adenosyl-L-homocysteine + H(+). Activated by automethylation. In terms of biological role, protein-lysine N-methyltransferase. Monomethylates 'Lys-310' of the RELA subunit of NF-kappa-B complex, leading to down-regulation of NF-kappa-B transcription factor activity. Monomethylates 'Lys-8' of H2AZ (H2AZK8me1). Required for the maintenance of embryonic stem cell self-renewal. Methylates PAK4. This chain is N-lysine methyltransferase SETD6, found in Homo sapiens (Human).